A 539-amino-acid chain; its full sequence is Monocarboxylate transporter 8 (539 aa).

A disordered region spans residues 1–92 (MALQSQASEE…VETRGTARGF (92 aa)). Residue A2 is modified to N-acetylalanine. At 2 to 96 (ALQSQASEEA…GTARGFQPPE (95 aa)) the chain is on the cytoplasmic side. Positions 31–41 (PESEPEPEPEP) are enriched in acidic residues. A compositionally biased stretch (pro residues) spans 42-64 (EPVPVPPPEPQPEPQPLPDPAPL). Residues 97–117 (GGFGWVVVFAATWCNGSIFGI) form a helical membrane-spanning segment. The Extracellular portion of the chain corresponds to 118-143 (HNSVGILYSMLLEEEKEKNRQVEFQA). A helical membrane pass occupies residues 144-164 (AWVGALAMGMIFFCSPIVSIF). Topologically, residues 165–171 (TDRLGCR) are cytoplasmic. The chain crosses the membrane as a helical span at residues 172–192 (ITATAGAAVAFIGLHTSSFTS). At 193–200 (SLSLRYFT) the chain is on the extracellular side. The helical transmembrane segment at 201 to 221 (YGILFGCGCSFAFQPSLVILG) threads the bilayer. Over 222–229 (HYFQRRLG) the chain is Cytoplasmic. A helical membrane pass occupies residues 230-250 (LANGVVSAGSSIFSMSFPFLI). At 251–258 (RMLGDKIK) the chain is on the extracellular side. The chain crosses the membrane as a helical span at residues 259 to 279 (LAQTFQVLSTFMFVLMLLSLT). Over 280 to 322 (YRPLLPSSQDTPSKRGVRTLHQRFLAQLRKYFNMRVFRQRTYR) the chain is Cytoplasmic. A helical membrane pass occupies residues 323–343 (IWAFGIAAAALGYFVPYVHLM). The Extracellular portion of the chain corresponds to 344–356 (KYVEEEFSEIKET). A helical transmembrane segment spans residues 357-377 (WVLLVCIGATSGLGRLVSGHI). The Cytoplasmic segment spans residues 378-386 (SDSIPGLKK). A helical membrane pass occupies residues 387–407 (IYLQVLSFLLLGLMSMMIPLC). The Extracellular portion of the chain corresponds to 408-409 (RD). The chain crosses the membrane as a helical span at residues 410–430 (FGGLIVVCLFLGLCDGFFITI). Over 431-447 (MAPIAFELVGPMQASQA) the chain is Cytoplasmic. The chain crosses the membrane as a helical span at residues 448-468 (IGYLLGMMALPMIAGPPIAGL). Over 469-477 (LRNCFGDYH) the chain is Extracellular. The chain crosses the membrane as a helical span at residues 478 to 498 (VAFYFAGVPPIIGAVILFFVP). Residues 499–539 (LMHQRMFKKEQRDSSKDKMLAPDPDPNGELLPGSPNPEEPI) lie on the Cytoplasmic side of the membrane. Residues 508–518 (EQRDSSKDKML) show a composition bias toward basic and acidic residues. Residues 508 to 539 (EQRDSSKDKMLAPDPDPNGELLPGSPNPEEPI) form a disordered region.

The protein belongs to the major facilitator superfamily. Monocarboxylate porter (TC 2.A.1.13) family. In terms of assembly, monomer. Homodimer. Homooligomer. Highly expressed in liver and heart. In adult brain tissue expression is largely confined to endothelial cells of the blood-brain barrier (at protein level).

Its subcellular location is the cell membrane. The protein resides in the apical cell membrane. It carries out the reaction 3,3',5-triiodo-L-thyronine(out) = 3,3',5-triiodo-L-thyronine(in). It catalyses the reaction L-thyroxine(out) = L-thyroxine(in). The enzyme catalyses 3,3',5'-triiodo-L-thyronine(out) = 3,3',5'-triiodo-L-thyronine(in). The catalysed reaction is 3,3'-diiodo-L-thyronine(out) = 3,3'-diiodo-L-thyronine(in). Functionally, specific thyroid hormone transmembrane transporter, that mediates both uptake and efflux of thyroid hormones across the cell membrane independently of pH or a Na(+) gradient. Major substrates are the iodothyronines T3 and T4 and to a lesser extent rT3 and 3,3-diiodothyronine (3,3'-T2). Acts as an important mediator of thyroid hormone transport, especially T3, through the blood-brain barrier. This Homo sapiens (Human) protein is Monocarboxylate transporter 8 (SLC16A2).